A 340-amino-acid polypeptide reads, in one-letter code: Phosphoribosylformylglycinamidine cyclo-ligase (340 aa).

This sequence belongs to the AIR synthase family.

The protein localises to the cytoplasm. It carries out the reaction 2-formamido-N(1)-(5-O-phospho-beta-D-ribosyl)acetamidine + ATP = 5-amino-1-(5-phospho-beta-D-ribosyl)imidazole + ADP + phosphate + H(+). It participates in purine metabolism; IMP biosynthesis via de novo pathway; 5-amino-1-(5-phospho-D-ribosyl)imidazole from N(2)-formyl-N(1)-(5-phospho-D-ribosyl)glycinamide: step 2/2. The protein is Phosphoribosylformylglycinamidine cyclo-ligase of Streptococcus gordonii (strain Challis / ATCC 35105 / BCRC 15272 / CH1 / DL1 / V288).